Consider the following 250-residue polypeptide: Oxidation resistance protein 1 (250 aa).

A TLDc domain is found at 61-250 (RLLSKEMCEE…IVGVEVWRVG (190 aa)).

It belongs to the OXR1 family.

It localises to the mitochondrion. Its function is as follows. May be involved in protection from oxidative damage. This Kluyveromyces lactis (strain ATCC 8585 / CBS 2359 / DSM 70799 / NBRC 1267 / NRRL Y-1140 / WM37) (Yeast) protein is Oxidation resistance protein 1 (OXR1).